The chain runs to 412 residues: ORC1-type DNA replication protein 2 (412 aa).

ATP-binding positions include 61-65, tyrosine 207, and arginine 219; that span reads VGKTA.

This sequence belongs to the CDC6/cdc18 family.

Involved in regulation of DNA replication. The sequence is that of ORC1-type DNA replication protein 2 (cdc6b) from Haloarcula marismortui (strain ATCC 43049 / DSM 3752 / JCM 8966 / VKM B-1809) (Halobacterium marismortui).